Consider the following 485-residue polypeptide: Glutamyl-tRNA(Gln) amidotransferase subunit A (485 aa).

Catalysis depends on charge relay system residues K80 and S155. S179 acts as the Acyl-ester intermediate in catalysis.

It belongs to the amidase family. GatA subfamily. As to quaternary structure, heterotrimer of A, B and C subunits.

The enzyme catalyses L-glutamyl-tRNA(Gln) + L-glutamine + ATP + H2O = L-glutaminyl-tRNA(Gln) + L-glutamate + ADP + phosphate + H(+). Functionally, allows the formation of correctly charged Gln-tRNA(Gln) through the transamidation of misacylated Glu-tRNA(Gln) in organisms which lack glutaminyl-tRNA synthetase. The reaction takes place in the presence of glutamine and ATP through an activated gamma-phospho-Glu-tRNA(Gln). This Endomicrobium trichonymphae protein is Glutamyl-tRNA(Gln) amidotransferase subunit A.